We begin with the raw amino-acid sequence, 830 residues long: WD repeat-containing protein 75 (830 aa).

WD repeat units follow at residues 4–42, 46–85, 89–130, 144–183, 192–230, 236–275, 278–317, 323–361, and 375–422; these read EGVR…KVYS, EECV…KLWD, GILI…QLVS, RQLT…YFFK, LPST…RLWR, QKYT…VEWR, SEKN…TVIH, SAVI…QFYS, and QQEY…KLWN. Residue lysine 426 forms a Glycyl lysine isopeptide (Lys-Gly) (interchain with G-Cter in SUMO2) linkage. 4 WD repeats span residues 429 to 473, 486 to 524, 528 to 568, and 573 to 610; these read GFVL…KVWI, AWTC…TIWD, WELK…CCWN, and SIQW…FVFK. 2 positions are modified to phosphoserine: serine 663 and serine 671. Residue lysine 675 forms a Glycyl lysine isopeptide (Lys-Gly) (interchain with G-Cter in SUMO2) linkage. The tract at residues 761 to 807 is disordered; it reads KSAEEVPDDVDMEGNKESDDSDEEYDLTEKDKETNNNTDLGEDAIHQ. Phosphoserine occurs at positions 778 and 781. Tyrosine 785 bears the Phosphotyrosine mark. The residue at position 811 (serine 811) is a Phosphoserine.

In terms of assembly, component of the proposed t-UTP subcomplex of the ribosomal small subunit (SSU) processome. SSU processome is composed of more than 70 proteins and the RNA chaperone small nucleolar RNA (snoRNA) U3.

Its subcellular location is the nucleus. The protein resides in the nucleolus. Functionally, ribosome biogenesis factor. Part of the small subunit (SSU) processome, first precursor of the small eukaryotic ribosomal subunit. During the assembly of the SSU processome in the nucleolus, many ribosome biogenesis factors, an RNA chaperone and ribosomal proteins associate with the nascent pre-rRNA and work in concert to generate RNA folding, modifications, rearrangements and cleavage as well as targeted degradation of pre-ribosomal RNA by the RNA exosome. Involved in nucleolar processing of pre-18S ribosomal RNA. Required for optimal pre-ribosomal RNA transcription by RNA polymerase I. This chain is WD repeat-containing protein 75 (Wdr75), found in Mus musculus (Mouse).